We begin with the raw amino-acid sequence, 212 residues long: Maleylpyruvate isomerase (212 aa).

One can recognise a GST N-terminal domain in the interval 1-80 (MKLYNFWRSG…WLEEQYPTPA (80 aa)). Glutathione contacts are provided by residues 9 to 11 (SGT), His38, Val52, 64 to 65 (QS), 102 to 104 (DIH), 108 to 110 (NRR), and Arg176. One can recognise a GST C-terminal domain in the interval 85 to 212 (DADGRQRVRA…AAPAAQPDSA (128 aa)).

The protein belongs to the GST superfamily. Zeta family. In terms of assembly, homodimer. It depends on glutathione as a cofactor.

The enzyme catalyses 3-maleylpyruvate = 3-fumarylpyruvate. The protein operates within aromatic compound metabolism; naphthalene degradation. Its function is as follows. Catalyzes the GSH-dependent isomerization of maleylpyruvate to fumarylpyruvate which is subsequently processed by NagK to form pyruvate and fumarate. This Ralstonia sp protein is Maleylpyruvate isomerase.